Consider the following 613-residue polypeptide: Alkyldihydroxyacetonephosphate synthase (613 aa).

Residues 126-307 enclose the FAD-binding PCMH-type domain; the sequence is IDRPPDAVIL…TEAVVKIERL (182 aa). Residues 158–164, 228–234, 241–244, and 291–297 contribute to the FAD site; these read PFGGGTN, DSYAYST, ARGS, and EGAFGLV. Position 437 (R437) interacts with substrate. The active-site Proton donor/acceptor is the Y498. Positions 534-536 are important for enzyme activity; it reads HHH. Residues 572–593 form a disordered region; sequence NPGKLLPSPPSEKETPKATQAR. The Microbody targeting signal signature appears at 611–613; sequence AHL.

This sequence belongs to the FAD-binding oxidoreductase/transferase type 4 family. As to quaternary structure, homodimer. The cofactor is FAD.

It is found in the peroxisome. The catalysed reaction is a long chain fatty alcohol + a 1-acylglycerone 3-phosphate = a 1-O-alkylglycerone 3-phosphate + a long-chain fatty acid + H(+). Its pathway is glycerolipid metabolism; ether lipid biosynthesis. Its function is as follows. Catalyzes the exchange of an acyl for a long-chain alkyl group and the formation of the ether bond in the biosynthesis of ether phospholipids. The sequence is that of Alkyldihydroxyacetonephosphate synthase from Trypanosoma brucei brucei.